The following is a 445-amino-acid chain: Exodeoxyribonuclease 7 large subunit (445 aa).

It belongs to the XseA family. In terms of assembly, heterooligomer composed of large and small subunits.

It is found in the cytoplasm. It catalyses the reaction Exonucleolytic cleavage in either 5'- to 3'- or 3'- to 5'-direction to yield nucleoside 5'-phosphates.. Bidirectionally degrades single-stranded DNA into large acid-insoluble oligonucleotides, which are then degraded further into small acid-soluble oligonucleotides. The chain is Exodeoxyribonuclease 7 large subunit from Shewanella oneidensis (strain ATCC 700550 / JCM 31522 / CIP 106686 / LMG 19005 / NCIMB 14063 / MR-1).